The chain runs to 498 residues: MHTHNNFKTPSDEDELDDLDEDMVVGVIAEIEQEVLNESDSDNDEYDLVDMGAPVPDNDGDVSYDGNDSISSDDSFDPNAADSDSDDSMLDEAGGGSAGGATSAKKRKDDDNPSGSNKQPEATFDLDEDDETDETVRAMIAAIKKPRSSPPEIKLEDFITDICFHPDRDIIALATIIGDVHLYEYDNEANKLLRTIEVHSKACRDVEFTEDGRFLLTCSKDKCVMVTDMETEKLKKLYETAHDDAINTLHVLNENLFASGDDAGTVKLWDLRTKNAIFELKELEDQITQLTTNEQSKLLLATSADGYLTTFNISARKMYVQSEPYEEELNCMGVYRGDSKLVVGTSKGRLYTYNWGQFGYHCDMYPGIKSPISLMIPITDRIACVAGEDGNIRACHIAPYRNLGVVGQHNMPIESLDVNASGELIASSSHNNDVRFWNVKYFEDFGEIKYNEKHNAYKEQRHNLPSSKCSNTSDFFADLTKEDADGDDDPCAGPSNMS.

The interval 1–131 (MHTHNNFKTP…ATFDLDEDDE (131 aa)) is disordered. 2 stretches are compositionally biased toward acidic residues: residues 12-23 (DEDELDDLDEDM) and 31-48 (IEQE…EYDL). 6 WD repeats span residues 154-193 (KLED…NKLL), 198-237 (VHSK…LKKL), 241-279 (AHDD…AIFE), 282-321 (ELED…MYVQ), 324-363 (PYEE…YHCD), and 408-447 (QHNM…DFGE).

Belongs to the WD repeat WDR55 family.

The chain is WD repeat-containing protein 55 homolog from Drosophila simulans (Fruit fly).